The sequence spans 399 residues: CCA-adding enzyme (399 aa).

ATP is bound by residues glycine 32 and arginine 35. Positions 32 and 35 each coordinate CTP. The Mg(2+) site is built by aspartate 45 and aspartate 47. Arginine 116, aspartate 159, arginine 162, arginine 165, and arginine 168 together coordinate ATP. CTP is bound by residues arginine 116, aspartate 159, arginine 162, arginine 165, and arginine 168.

This sequence belongs to the tRNA nucleotidyltransferase/poly(A) polymerase family. Bacterial CCA-adding enzyme type 3 subfamily. As to quaternary structure, homodimer. It depends on Mg(2+) as a cofactor.

The catalysed reaction is a tRNA precursor + 2 CTP + ATP = a tRNA with a 3' CCA end + 3 diphosphate. The enzyme catalyses a tRNA with a 3' CCA end + 2 CTP + ATP = a tRNA with a 3' CCACCA end + 3 diphosphate. Its function is as follows. Catalyzes the addition and repair of the essential 3'-terminal CCA sequence in tRNAs without using a nucleic acid template. Adds these three nucleotides in the order of C, C, and A to the tRNA nucleotide-73, using CTP and ATP as substrates and producing inorganic pyrophosphate. tRNA 3'-terminal CCA addition is required both for tRNA processing and repair. Also involved in tRNA surveillance by mediating tandem CCA addition to generate a CCACCA at the 3' terminus of unstable tRNAs. While stable tRNAs receive only 3'-terminal CCA, unstable tRNAs are marked with CCACCA and rapidly degraded. This Streptococcus pneumoniae serotype 4 (strain ATCC BAA-334 / TIGR4) protein is CCA-adding enzyme.